The following is a 290-amino-acid chain: Bifunctional protein FolD (290 aa).

NADP(+)-binding positions include 166–168 (GAS) and Ile232.

Belongs to the tetrahydrofolate dehydrogenase/cyclohydrolase family. In terms of assembly, homodimer.

The enzyme catalyses (6R)-5,10-methylene-5,6,7,8-tetrahydrofolate + NADP(+) = (6R)-5,10-methenyltetrahydrofolate + NADPH. The catalysed reaction is (6R)-5,10-methenyltetrahydrofolate + H2O = (6R)-10-formyltetrahydrofolate + H(+). The protein operates within one-carbon metabolism; tetrahydrofolate interconversion. Functionally, catalyzes the oxidation of 5,10-methylenetetrahydrofolate to 5,10-methenyltetrahydrofolate and then the hydrolysis of 5,10-methenyltetrahydrofolate to 10-formyltetrahydrofolate. This is Bifunctional protein FolD from Proteus mirabilis (strain HI4320).